We begin with the raw amino-acid sequence, 359 residues long: Mannonate dehydratase (359 aa).

This sequence belongs to the mannonate dehydratase family. It depends on Fe(2+) as a cofactor. Mn(2+) is required as a cofactor.

The enzyme catalyses D-mannonate = 2-dehydro-3-deoxy-D-gluconate + H2O. The protein operates within carbohydrate metabolism; pentose and glucuronate interconversion. Functionally, catalyzes the dehydration of D-mannonate. In Moorella thermoacetica (strain ATCC 39073 / JCM 9320), this protein is Mannonate dehydratase.